Reading from the N-terminus, the 792-residue chain is DEAD-box ATP-dependent RNA helicase 40 (792 aa).

A compositionally biased stretch (low complexity) spans 1–16 (MSAGTAPAAPRYAPDD). Disordered regions lie at residues 1–25 (MSAG…PWRG) and 44–118 (TQYE…PLPA). Residues 17–51 (PSLPKPWRGLVDGTTGYLYYWNPETNITQYEKPLP) enclose the WW domain. Residues 52 to 68 (PEDQLPPPPPLPPPPPR) are compositionally biased toward pro residues. Composition is skewed to basic and acidic residues over residues 70–80 (GRGDRDRDRRD) and 88–108 (PRRD…DHRS). Positions 150 to 178 (TSFETGGFPPEILKEIQRAGFSSPTPIQA) match the Q motif motif. The Helicase ATP-binding domain occupies 181 to 355 (WPIALQCQDV…EDLLVHPVQV (175 aa)). An ATP-binding site is contributed by 194–201 (AKTGSGKT). The DEAD box signature appears at 303–306 (DEAD). Residues 384–528 (RLEQILRSQD…RVPRDLADMA (145 aa)) form the Helicase C-terminal domain. A disordered region spans residues 523–792 (DLADMASRGG…NATVQNGGDN (270 aa)). 2 stretches are compositionally biased toward basic and acidic residues: residues 543-560 (TRSD…RYGG) and 572-588 (DSSR…DGRS). Composition is skewed to basic residues over residues 589–599 (RRSGRGRSRSR) and 609–654 (RSPK…RRHE). Over residues 668-708 (GHGERKRTPEADPSRNHTNHSDPKDDRHPEDGKVGKVDLDR) the composition is skewed to basic and acidic residues. Residues 725-739 (GKTSRSVSPGNQVEG) show a composition bias toward polar residues. The span at 764–777 (DEEEGMIDEDGEIA) shows a compositional bias: acidic residues.

The protein belongs to the DEAD box helicase family. DDX5/DBP2 subfamily.

Its subcellular location is the nucleus. It carries out the reaction ATP + H2O = ADP + phosphate + H(+). Functionally, ATP-dependent RNA helicase involved nonsense-mediated mRNA decay and ribosome biogenesis through rRNA processing. The polypeptide is DEAD-box ATP-dependent RNA helicase 40 (Oryza sativa subsp. japonica (Rice)).